We begin with the raw amino-acid sequence, 600 residues long: Elongation factor 4 (600 aa).

A tr-type G domain is found at K3–Q185. GTP-binding positions include D15–T20 and N132–D135.

This sequence belongs to the TRAFAC class translation factor GTPase superfamily. Classic translation factor GTPase family. LepA subfamily.

The protein resides in the cell inner membrane. The enzyme catalyses GTP + H2O = GDP + phosphate + H(+). Required for accurate and efficient protein synthesis under certain stress conditions. May act as a fidelity factor of the translation reaction, by catalyzing a one-codon backward translocation of tRNAs on improperly translocated ribosomes. Back-translocation proceeds from a post-translocation (POST) complex to a pre-translocation (PRE) complex, thus giving elongation factor G a second chance to translocate the tRNAs correctly. Binds to ribosomes in a GTP-dependent manner. The protein is Elongation factor 4 of Blochmanniella pennsylvanica (strain BPEN).